The sequence spans 425 residues: Gamma-glutamyl phosphate reductase (425 aa).

It belongs to the gamma-glutamyl phosphate reductase family.

It localises to the cytoplasm. The catalysed reaction is L-glutamate 5-semialdehyde + phosphate + NADP(+) = L-glutamyl 5-phosphate + NADPH + H(+). It participates in amino-acid biosynthesis; L-proline biosynthesis; L-glutamate 5-semialdehyde from L-glutamate: step 2/2. Its function is as follows. Catalyzes the NADPH-dependent reduction of L-glutamate 5-phosphate into L-glutamate 5-semialdehyde and phosphate. The product spontaneously undergoes cyclization to form 1-pyrroline-5-carboxylate. This is Gamma-glutamyl phosphate reductase from Xylella fastidiosa (strain M23).